Reading from the N-terminus, the 288-residue chain is 4-diphosphocytidyl-2-C-methyl-D-erythritol kinase (288 aa).

K22 is a catalytic residue. Residue 104–114 (PSQAGLGGGSS) coordinates ATP. D146 is a catalytic residue.

Belongs to the GHMP kinase family. IspE subfamily.

The enzyme catalyses 4-CDP-2-C-methyl-D-erythritol + ATP = 4-CDP-2-C-methyl-D-erythritol 2-phosphate + ADP + H(+). Its pathway is isoprenoid biosynthesis; isopentenyl diphosphate biosynthesis via DXP pathway; isopentenyl diphosphate from 1-deoxy-D-xylulose 5-phosphate: step 3/6. Functionally, catalyzes the phosphorylation of the position 2 hydroxy group of 4-diphosphocytidyl-2C-methyl-D-erythritol. The chain is 4-diphosphocytidyl-2-C-methyl-D-erythritol kinase from Protochlamydia amoebophila (strain UWE25).